Here is a 25-residue protein sequence, read N- to C-terminus: Omega-conotoxin CVIB (25 aa).

Cystine bridges form between C1–C16, C8–C20, and C15–C25. The residue at position 25 (C25) is a Cysteine amide.

It belongs to the conotoxin O1 superfamily. Expressed by the venom duct.

Its subcellular location is the secreted. Its function is as follows. Omega-conotoxins act at presynaptic membranes, they bind and block voltage-gated calcium channels (Cav). This toxin blocks N-, P- and Q-type calcium channels. It shows high activities on Cav2.1/CACNA1A (IC(50)=11 nM) and Cav2.2/CACNA1B (IC(50)=7.7 nM). In addition, it shows a higher potency when Cav2.2/CACNA1B is only expressed with the ancillary subunit CACNB3 (IC(50)=1.6 nM) than on Cav2.2/CACNA1B expressed with the ancillary subunits CACNA2D1 and CACNB3 (IC(50)=12 nM). Both the Cav2.2/CACNA1B block by this toxin and the recovery are voltage-independent. It is noteworthy that ancillary subunits beta do not modulate recovery from this toxin block, since Cav2.2/CACNA1B expressed with either the ancillary subunit CACNB2a (isoform 2a) or with CACNB3 exhibits moderate recovery. The chain is Omega-conotoxin CVIB from Conus catus (Cat cone).